Consider the following 446-residue polypeptide: Tripartite motif-containing protein 43C (446 aa).

The RING-type zinc finger occupies 16–57 (CSICQGIFMDPVYLRCGHKFCETCLLLFQEDIKFPAYCPTCR). The B box-type zinc finger occupies 88–129 (SEEHKCVTHKAKKMIFCDKSKILLCHLCSDSQEHSGHTHCSI). Cysteine 93, histidine 96, cysteine 115, and histidine 121 together coordinate Zn(2+). Residues 271-446 (RLRAHSIPGL…VRPFFFAAYT (176 aa)) enclose the B30.2/SPRY domain.

Belongs to the TRIM/RBCC family.

The sequence is that of Tripartite motif-containing protein 43C from Mus musculus (Mouse).